A 583-amino-acid chain; its full sequence is Membrane protein insertase YidC (583 aa).

Residues 5–25 (SVTGLALIALIMIVWLQFMSP) form a helical membrane-spanning segment. Residues 28–50 (KSVQPDNRPKAQTTATVSQEKTE) are disordered. A compositionally biased stretch (polar residues) spans 37–46 (KAQTTATVSQ). 5 consecutive transmembrane segments (helical) span residues 341-361 (PFAE…ISNY), 362-382 (GLII…LSMA), 427-447 (LGGC…FYVF), 477-497 (IPVY…TVFI), and 515-535 (LYIF…GLGL).

Belongs to the OXA1/ALB3/YidC family. Type 1 subfamily. As to quaternary structure, interacts with the Sec translocase complex via SecD. Specifically interacts with transmembrane segments of nascent integral membrane proteins during membrane integration.

It localises to the cell inner membrane. In terms of biological role, required for the insertion and/or proper folding and/or complex formation of integral membrane proteins into the membrane. Involved in integration of membrane proteins that insert both dependently and independently of the Sec translocase complex, as well as at least some lipoproteins. Aids folding of multispanning membrane proteins. This is Membrane protein insertase YidC from Chlorobium limicola (strain DSM 245 / NBRC 103803 / 6330).